Consider the following 125-residue polypeptide: NADPH-dependent 7-cyano-7-deazaguanine reductase (125 aa).

Cysteine 41 functions as the Thioimide intermediate in the catalytic mechanism. Catalysis depends on aspartate 48, which acts as the Proton donor. Residues 63 to 65 and 82 to 83 contribute to the substrate site; these read VEL and HE.

Belongs to the GTP cyclohydrolase I family. QueF type 1 subfamily.

It localises to the cytoplasm. The enzyme catalyses 7-aminomethyl-7-carbaguanine + 2 NADP(+) = 7-cyano-7-deazaguanine + 2 NADPH + 3 H(+). Its pathway is tRNA modification; tRNA-queuosine biosynthesis. Functionally, catalyzes the NADPH-dependent reduction of 7-cyano-7-deazaguanine (preQ0) to 7-aminomethyl-7-deazaguanine (preQ1). The chain is NADPH-dependent 7-cyano-7-deazaguanine reductase from Sulfurimonas denitrificans (strain ATCC 33889 / DSM 1251) (Thiomicrospira denitrificans (strain ATCC 33889 / DSM 1251)).